An 80-amino-acid chain; its full sequence is Reactive oxygen species modulator 1 (80 aa).

A helical transmembrane segment spans residues 22 to 44 (MGFMMGFAVGMAAGAMFGTFSCL). A sufficient for antibacterial activity region spans residues 42-60 (SCLRIGMRGRELMGGVGKT).

The protein belongs to the MGR2 family.

The protein resides in the mitochondrion inner membrane. Its function is as follows. Has antibacterial activity against a variety of bacteria including S.aureus, P.aeruginosa and M.tuberculosis. Acts by inducing bacterial membrane breakage. Induces production of reactive oxygen species (ROS) which are necessary for cell proliferation. May play a role in inducing oxidative DNA damage and replicative senescence. May play a role in the coordination of mitochondrial morphology and cell proliferation. This Danio rerio (Zebrafish) protein is Reactive oxygen species modulator 1 (romo1).